The primary structure comprises 230 residues: DNA mismatch repair protein MutH (230 aa).

This sequence belongs to the MutH family.

The protein localises to the cytoplasm. Sequence-specific endonuclease that cleaves unmethylated GATC sequences. It is involved in DNA mismatch repair. The protein is DNA mismatch repair protein MutH of Citrobacter koseri (strain ATCC BAA-895 / CDC 4225-83 / SGSC4696).